Here is a 33-residue protein sequence, read N- to C-terminus: Cytochrome b6-f complex subunit 8 (33 aa).

Residues 2–22 (LITLGWASLAALFSFSIAMVV) form a helical membrane-spanning segment.

The protein belongs to the PetN family. The 4 large subunits of the cytochrome b6-f complex are cytochrome b6, subunit IV (17 kDa polypeptide, PetD), cytochrome f and the Rieske protein, while the 4 small subunits are PetG, PetL, PetM and PetN. The complex functions as a dimer.

Its subcellular location is the plastid. The protein resides in the organellar chromatophore thylakoid membrane. Its function is as follows. Component of the cytochrome b6-f complex, which mediates electron transfer between photosystem II (PSII) and photosystem I (PSI), cyclic electron flow around PSI, and state transitions. The protein is Cytochrome b6-f complex subunit 8 of Paulinella chromatophora.